We begin with the raw amino-acid sequence, 535 residues long: MYIQRWLYSTNAKDIAILYFIFAIFSGVIGSTMSLIIRLELAAPGNQILHGNHQLFNVLVVGHALLMIFFLVMPGLVGGFGNYMLPLLIGASDMSFARLNNISFWLLPPALVCLVASTLIESWAGTGWTIYPPLSGIQAHSSPSVDLGIFAIHLTSISSLLGAINFIATSYNMRTNGMSYSKMPLFVWAIIITAVMLLLSLPVLTAGVTMLLMDRNFNTSFFEVAGGGDPVLYQHLFWFFGHPEVYILIVPGFGIISHIVSTYSKKPVFGEISMVYAMASIAFLGFLVWSHHMYIVGLDADTRAYFTSSTMVIAVPTGIKIFSWLATLYGGSIRLAVPMLYAIAFLFLFTIGGLTGVALANASLDVAFHDTYYVVGHFHYVLSMGAIFSLFAGYYYWSPQILGLYFNERLAQIQFWLIFVGANVIFMPMHFLGLQGMPRRIPDYPDAYAGWNYVSSIGSVIAIISLALFIYIIYDQLINGLTNKIDNKSVVYSKAPDFVESNTIFANNSIKSASIEFLLNSPPAIHSFNTPAVQS.

A helical transmembrane segment spans residues 17-37; that stretch reads ILYFIFAIFSGVIGSTMSLII. Ca(2+) is bound by residues glutamate 40, alanine 43, and glycine 45. 6 helical membrane-spanning segments follow: residues 58-78, 104-124, 147-167, 184-204, 236-256, and 268-288; these read VLVV…GLVG, FWLL…ESWA, LGIF…INFI, PLFV…LPVL, LFWF…FGII, and VFGE…GFLV. Residue histidine 63 coordinates Fe(II)-heme a. Residue histidine 242 participates in Cu cation binding. The segment at residues 242–246 is a cross-link (1'-histidyl-3'-tyrosine (His-Tyr)); sequence HPEVY. Tyrosine 246 contacts O2. The Cu cation site is built by histidine 291 and histidine 292. A run of 2 helical transmembrane segments spans residues 311–331 and 339–359; these read MVIA…LYGG and MLYA…GVAL. Mg(2+)-binding residues include histidine 369 and aspartate 370. 2 helical membrane-spanning segments follow: residues 373–393 and 413–433; these read YVVG…LFAG and IQFW…HFLG. Histidine 377 is a heme a3 binding site. Histidine 379 provides a ligand contact to Fe(II)-heme a. Ca(2+) is bound at residue proline 442. The helical transmembrane segment at 453–473 threads the bilayer; the sequence is YVSSIGSVIAIISLALFIYII.

It belongs to the heme-copper respiratory oxidase family. As to quaternary structure, component of the cytochrome c oxidase (complex IV, CIV), a multisubunit enzyme composed of a catalytic core of 3 subunits and several supernumerary subunits. The complex exists as a monomer or a dimer and forms supercomplexes (SCs) in the inner mitochondrial membrane with ubiquinol-cytochrome c oxidoreductase (cytochrome b-c1 complex, complex III, CIII). Heme is required as a cofactor. Requires Cu cation as cofactor.

Its subcellular location is the mitochondrion inner membrane. The enzyme catalyses 4 Fe(II)-[cytochrome c] + O2 + 8 H(+)(in) = 4 Fe(III)-[cytochrome c] + 2 H2O + 4 H(+)(out). It functions in the pathway energy metabolism; oxidative phosphorylation. In terms of biological role, component of the cytochrome c oxidase, the last enzyme in the mitochondrial electron transport chain which drives oxidative phosphorylation. The respiratory chain contains 3 multisubunit complexes succinate dehydrogenase (complex II, CII), ubiquinol-cytochrome c oxidoreductase (cytochrome b-c1 complex, complex III, CIII) and cytochrome c oxidase (complex IV, CIV), that cooperate to transfer electrons derived from NADH and succinate to molecular oxygen, creating an electrochemical gradient over the inner membrane that drives transmembrane transport and the ATP synthase. Cytochrome c oxidase is the component of the respiratory chain that catalyzes the reduction of oxygen to water. Electrons originating from reduced cytochrome c in the intermembrane space (IMS) are transferred via the dinuclear copper A center (CU(A)) of subunit 2 and heme A of subunit 1 to the active site in subunit 1, a binuclear center (BNC) formed by heme A3 and copper B (CU(B)). The BNC reduces molecular oxygen to 2 water molecules using 4 electrons from cytochrome c in the IMS and 4 protons from the mitochondrial matrix. The chain is Cytochrome c oxidase subunit 1 (COX1) from Wickerhamomyces canadensis (Yeast).